The following is a 641-amino-acid chain: Mannosyl-oligosaccharide 1,2-alpha-mannosidase IB (641 aa).

T2 bears the N-acetylthreonine mark. The Cytoplasmic segment spans residues 2-36 (TTPALLPLSGRRIPPLNLGPPSFPHHRATLRLSEK). A helical; Signal-anchor for type II membrane protein transmembrane segment spans residues 37–57 (FILLLILSAFITLCFGAFFFL). The Lumenal portion of the chain corresponds to 58–641 (PDSSKHKRFD…STLSGNPAVR (584 aa)). A disulfide bridge connects residues C462 and C494. E508 functions as the Proton donor in the catalytic mechanism. T619 is a Ca(2+) binding site. The N-linked (GlcNAc...) asparagine glycan is linked to N631.

It belongs to the glycosyl hydrolase 47 family. Ca(2+) is required as a cofactor.

The protein resides in the golgi apparatus membrane. It carries out the reaction N(4)-(alpha-D-Man-(1-&gt;2)-alpha-D-Man-(1-&gt;2)-alpha-D-Man-(1-&gt;3)-[alpha-D-Man-(1-&gt;2)-alpha-D-Man-(1-&gt;3)-[alpha-D-Man-(1-&gt;2)-alpha-D-Man-(1-&gt;6)]-alpha-D-Man-(1-&gt;6)]-beta-D-Man-(1-&gt;4)-beta-D-GlcNAc-(1-&gt;4)-beta-D-GlcNAc)-L-asparaginyl-[protein] (N-glucan mannose isomer 9A1,2,3B1,2,3) + 4 H2O = N(4)-(alpha-D-Man-(1-&gt;3)-[alpha-D-Man-(1-&gt;3)-[alpha-D-Man-(1-&gt;6)]-alpha-D-Man-(1-&gt;6)]-beta-D-Man-(1-&gt;4)-beta-D-GlcNAc-(1-&gt;4)-beta-D-GlcNAc)-L-asparaginyl-[protein] (N-glucan mannose isomer 5A1,2) + 4 beta-D-mannose. The enzyme catalyses N(4)-(alpha-D-Man-(1-&gt;2)-alpha-D-Man-(1-&gt;2)-alpha-D-Man-(1-&gt;3)-[alpha-D-Man-(1-&gt;3)-[alpha-D-Man-(1-&gt;2)-alpha-D-Man-(1-&gt;6)]-alpha-D-Man-(1-&gt;6)]-beta-D-Man-(1-&gt;4)-beta-D-GlcNAc-(1-&gt;4)-beta-D-GlcNAc)-L-asparaginyl-[protein] (N-glucan mannose isomer 8A1,2,3B1,3) + 3 H2O = N(4)-(alpha-D-Man-(1-&gt;3)-[alpha-D-Man-(1-&gt;3)-[alpha-D-Man-(1-&gt;6)]-alpha-D-Man-(1-&gt;6)]-beta-D-Man-(1-&gt;4)-beta-D-GlcNAc-(1-&gt;4)-beta-D-GlcNAc)-L-asparaginyl-[protein] (N-glucan mannose isomer 5A1,2) + 3 beta-D-mannose. The protein operates within protein modification; protein glycosylation. Inhibited by both 1-deoxymannojirimycin and kifunensine. Its function is as follows. Involved in the maturation of Asn-linked oligosaccharides. Progressively trim alpha-1,2-linked mannose residues from Man(9)GlcNAc(2) to produce Man(5)GlcNAc(2). This Mus musculus (Mouse) protein is Mannosyl-oligosaccharide 1,2-alpha-mannosidase IB (Man1a2).